A 211-amino-acid chain; its full sequence is Shikimate kinase (211 aa).

Residues 1–13 (MNASANLCAASAN) are compositionally biased toward low complexity. The segment at 1–24 (MNASANLCAASANDPQPGDQEAAH) is disordered. 50-55 (GAGKTT) contributes to the ATP binding site. Thr54 contributes to the Mg(2+) binding site. Residues Asp72, Arg96, and Gly118 each coordinate substrate. Residue Arg156 participates in ATP binding. Position 175 (Arg175) interacts with substrate.

Belongs to the shikimate kinase family. In terms of assembly, monomer. The cofactor is Mg(2+).

Its subcellular location is the cytoplasm. The enzyme catalyses shikimate + ATP = 3-phosphoshikimate + ADP + H(+). The protein operates within metabolic intermediate biosynthesis; chorismate biosynthesis; chorismate from D-erythrose 4-phosphate and phosphoenolpyruvate: step 5/7. Catalyzes the specific phosphorylation of the 3-hydroxyl group of shikimic acid using ATP as a cosubstrate. This chain is Shikimate kinase, found in Bordetella parapertussis (strain 12822 / ATCC BAA-587 / NCTC 13253).